Consider the following 407-residue polypeptide: Melanoma-associated antigen B6 (407 aa).

The interval 1–175 (MPRGHKSKLR…YDVAAEGEDE (175 aa)) is disordered. Polar residues-rich tracts occupy residues 18–29 (TNGQPQGLTGPQ), 57–71 (DASI…SPTG), 94–113 (PSTS…SPTG), and 136–155 (PSTS…SPTG). The 200-residue stretch at 195-394 (VKKKACTLAQ…GLYPHLYEDA (200 aa)) folds into the MAGE domain.

In terms of tissue distribution, expressed in testis. Not expressed in other normal tissues, but is expressed in tumors of different histological origins.

This is Melanoma-associated antigen B6 (MAGEB6) from Homo sapiens (Human).